The sequence spans 157 residues: Hydra actinoporin-like toxin 3 (157 aa).

The signal sequence occupies residues 1-14; that stretch reads LEATVSRNKKYKFT. Residues 129–131 carry the Cell attachment site motif; that stretch reads IAG.

It belongs to the actinoporin family. HALT subfamily. As to quaternary structure, octamer or nonamer in membranes. Monomer in the soluble state. In vitro, interacts with folate receptor alpha (of target organism).

The protein localises to the nematocyst. Its subcellular location is the secreted. The protein resides in the target cell membrane. Functionally, pore-forming protein that forms hydrophilic pores and causes cytolysis. Compared to equinatoxin-2 (AC P61914), it reveals lower cytolysis activity (5-12-fold difference, tested on erythrocytes), a larger pore size (probably 2-3 nm) and different affinity to membrane lipids (100-fold lower affinity to sphingomyelin). Binds to the two sphingolipids, lysophosphatidic acid (LPA) and sphingosine-1-phosphate (S1P). Does not bind (or only weakly) to sulfatides (SFT). Shows cytolytic activity on HeLa cells, with a different potency than its paralogs (from most potent to less potent: HALT-4&gt;HALT-6~HALT-1&gt;HALT-3&gt;HALT-7&gt;HALT-2). Pore formation is a multi-step process that involves specific recognition of membrane lipid by a protein aromatic residues rich region, firm binding to the membrane (mainly driven by hydrophobic interactions) accompanied by the transfer of the N-terminal region to the lipid-water interface and finally pore formation after oligomerization of monomers. In vitro, binds to the folate receptor alpha (FOLR1), a GPI-anchored membrane protein that plays a major role in the uptake of folate/folic acid into cells via endocytosis, suggesting a possible involvement of this receptor in the mechanism of HALT-1-induced cell lysis. In vivo, does not cause visible paralysis in larvae of the blowfly Sarcophaga faculata, the most common arthropod prey of Hydra. The chain is Hydra actinoporin-like toxin 3 from Hydra vulgaris (Hydra).